The sequence spans 360 residues: MEQLKVVLGKRSYPINIGSSIIQEDNIFWPLNPGNQAMLITNKTLANLFKDKVFFHLRKSGIKIDQVILSDGEQFKTLNEMEVIISALLEKKHSRDTTLIALGGGVIGDLTGFSASIYQRGVRFIQIPTTLLSQVDASVGGKTGVNHLLGKNMVGSFWQPSSVIIDINFLKTLPYNELVSGMAEVIKYAVIFDANFFEWLEENIENLLLLNDELMSYCIKKCCELKAQIIALDERENNFRALLNFGHTYGHAIEAHAGYGSWLHGEAISVGMVMASRTSELIGCLKKTDYKRILSLLKKAGLPVKGPKNMSAASYLPYMMRDKKVISGEMRLVLPISIGKAKIYSGIDKNIILSAIKDSQ.

Residues 71 to 76 (DGEQFK), 105 to 109 (GVIGD), 129 to 130 (TT), Lys142, Lys151, and 169 to 172 (FLKT) each bind NAD(+). Zn(2+) is bound by residues Glu184, His247, and His264.

Belongs to the sugar phosphate cyclases superfamily. Dehydroquinate synthase family. The cofactor is NAD(+). Co(2+) is required as a cofactor. Requires Zn(2+) as cofactor.

The protein resides in the cytoplasm. The enzyme catalyses 7-phospho-2-dehydro-3-deoxy-D-arabino-heptonate = 3-dehydroquinate + phosphate. It functions in the pathway metabolic intermediate biosynthesis; chorismate biosynthesis; chorismate from D-erythrose 4-phosphate and phosphoenolpyruvate: step 2/7. Its function is as follows. Catalyzes the conversion of 3-deoxy-D-arabino-heptulosonate 7-phosphate (DAHP) to dehydroquinate (DHQ). This is 3-dehydroquinate synthase from Buchnera aphidicola subsp. Schizaphis graminum (strain Sg).